The primary structure comprises 1582 residues: Hybrid PKS-NRPS synthetase TAS1 (1582 aa).

A condensation (C) domain region spans residues 33 to 387; sequence IPLSKVQEVL…GEDTAAASRV (355 aa). Residues 499–892 are adenylation (A) domain; sequence RSRAATQPDE…KLHILGRMNN (394 aa). In terms of domain architecture, Carrier spans 1015–1092; sequence NLVDRLEASI…RQAQRLSELV (78 aa). One can recognise a Ketosynthase family 3 (KS3) domain in the interval 1127–1574; the sequence is APLFAIVGMA…GVNAHCILAS (448 aa). Active-site for beta-ketoacyl synthase activity residues include Cys1294 and His1432. A disordered region spans residues 1460–1485; the sequence is ESRCSSGAISPTGTEQQPSDTKQTPR. The segment covering 1462 to 1485 has biased composition (polar residues); that stretch reads RCSSGAISPTGTEQQPSDTKQTPR. Asn1498 serves as the catalytic For beta-ketoacyl synthase activity.

It in the N-terminal section; belongs to the NRP synthetase family. It depends on pantetheine 4'-phosphate as a cofactor.

It catalyses the reaction acetoacetyl-CoA + L-isoleucine + ATP = tenuazonic acid + AMP + diphosphate + CoA + 2 H(+). Functionally, hybrid PKS-NRPS synthetase that mediates the biosynthesis of the toxin tenuazonic acid (TeA), an inhibitor of protein biosynthesis on ribosomes by suppressing the release of new protein. TAS1 alone is sufficient for TeA synthesis via the condensation of isoleucine (Ile) with acetoacetyl-CoA by the N-terminal NRPS module and subsequent cyclization conducted by the C-terminal KS domain. The protein is Hybrid PKS-NRPS synthetase TAS1 of Cordyceps militaris (strain CM01) (Caterpillar fungus).